The following is a 1881-amino-acid chain: Nuclear pore membrane glycoprotein 210-like (1881 aa).

Residues 1-32 form the signal peptide; it reads MIAFGAPRRRSFGLLFSLAPHLFFLFLIGTLA. N80, N344, and N808 each carry an N-linked (GlcNAc...) asparagine glycan. Positions 1078–1150 constitute a BIG2 domain; the sequence is FPPFRLIPEK…TIQTVNEDTG (73 aa). A glycan (N-linked (GlcNAc...) asparagine) is linked at N1441. Residues 1804-1824 traverse the membrane as a helical segment; the sequence is YQILLFTLFAVLASTSFIFLA.

This sequence belongs to the NUP210 family. In terms of tissue distribution, expressed in testis.

It localises to the nucleus membrane. It is found in the nucleus. The protein resides in the nucleoplasm. In Mus musculus (Mouse), this protein is Nuclear pore membrane glycoprotein 210-like (Nup210l).